Reading from the N-terminus, the 292-residue chain is Elongation factor Ts (292 aa).

The interval 79 to 82 (TDFV) is involved in Mg(2+) ion dislocation from EF-Tu.

Belongs to the EF-Ts family.

It is found in the cytoplasm. Its function is as follows. Associates with the EF-Tu.GDP complex and induces the exchange of GDP to GTP. It remains bound to the aminoacyl-tRNA.EF-Tu.GTP complex up to the GTP hydrolysis stage on the ribosome. This chain is Elongation factor Ts, found in Xanthomonas oryzae pv. oryzae (strain MAFF 311018).